The following is a 216-amino-acid chain: Movement and silencing protein TGBp1 (216 aa).

The region spanning 1 to 110 (MEFCGGTLRT…GEVRPAHFTC (110 aa)) is the (+)RNA virus helicase ATP-binding domain. Positions 111-216 (SHTHRFGKST…RHTDSLLILN (106 aa)) constitute a (+)RNA virus helicase C-terminal domain.

It belongs to the Tymovirales TGBp1 protein family. Homodimer and homooligomer. Interacts with capsid protein. Interacts with host AGO1; this interaction targets the host protein for degradation, thereby suppressing the antiviral RNA silencing.

The protein resides in the host cytoplasm. In terms of biological role, transports viral genome to neighboring plant cells directly through plasmosdesmata, without any budding. The movement protein allows efficient cell to cell propagation, by bypassing the host cell wall barrier. Increases plasmodesma size exclusion limit. Acts as a suppressor of RNA-mediated gene silencing, also known as post-transcriptional gene silencing (PTGS), a mechanism of plant viral defense that limits the accumulation of viral RNAs. In Lilium formosanum, this protein is Movement and silencing protein TGBp1.